A 238-amino-acid chain; its full sequence is MATKKQSELYSGKAKTVYITDDPTQLILYFRDDTSAFDGKKIERFSRKGEINNKFNAFIMEKLAAAGIPTHFERLLSEQESLVKRLEMFPIECVVRNIATGSLCRRLGVQDGLDLDPPVFEFFLKDDARHDPMINEYHIRTFGWANPKQVEQMKEYTFRINDILKVLFLEAGLLLVDYKLEFGDVQGQVLLGDEFTPDGCRLWDVKTREKLDKDRFRHGLGGVTEAYEEVARRLGMSL.

It belongs to the SAICAR synthetase family.

The enzyme catalyses 5-amino-1-(5-phospho-D-ribosyl)imidazole-4-carboxylate + L-aspartate + ATP = (2S)-2-[5-amino-1-(5-phospho-beta-D-ribosyl)imidazole-4-carboxamido]succinate + ADP + phosphate + 2 H(+). It functions in the pathway purine metabolism; IMP biosynthesis via de novo pathway; 5-amino-1-(5-phospho-D-ribosyl)imidazole-4-carboxamide from 5-amino-1-(5-phospho-D-ribosyl)imidazole-4-carboxylate: step 1/2. This is Phosphoribosylaminoimidazole-succinocarboxamide synthase from Nitrosococcus oceani (strain ATCC 19707 / BCRC 17464 / JCM 30415 / NCIMB 11848 / C-107).